A 482-amino-acid polypeptide reads, in one-letter code: Anaerobic nitric oxide reductase flavorubredoxin (482 aa).

The tract at residues 30 to 210 (LRGSSYNSYL…PFSRLVTPKI (181 aa)) is zinc metallo-hydrolase. The Fe cation site is built by His79, Glu81, Asp83, His147, Asp166, and His227. The region spanning 254 to 393 (ITLFYDTMSN…ICRQHGREIA (140 aa)) is the Flavodoxin-like domain. FMN is bound by residues 260-264 (TMSNN) and 342-369 (AFGS…EMSM). The Rubredoxin-like domain maps to 426 to 477 (GPCMQCSVCQWVYDPALGEPLQDVAPGTPWSDVPDNFLCPECSLGKDVFDVL). Positions 431, 434, 464, and 467 each coordinate Fe cation.

The protein in the N-terminal section; belongs to the zinc metallo-hydrolase group 3 family. As to quaternary structure, homotetramer. Fe cation serves as cofactor. It depends on FMN as a cofactor.

It localises to the cytoplasm. Its pathway is nitrogen metabolism; nitric oxide reduction. Its function is as follows. Anaerobic nitric oxide reductase; uses NADH to detoxify nitric oxide (NO), protecting several 4Fe-4S NO-sensitive enzymes. Has at least 2 reductase partners, only one of which (NorW, flavorubredoxin reductase) has been identified. NO probably binds to the di-iron center; electrons enter from the NorW at rubredoxin and are transferred sequentially to the FMN center and the di-iron center. Also able to function as an aerobic oxygen reductase. The protein is Anaerobic nitric oxide reductase flavorubredoxin of Enterobacter sp. (strain 638).